The primary structure comprises 60 residues: Mastoparan-VT5 (60 aa).

The first 27 residues, 1–27, serve as a signal peptide directing secretion; the sequence is MKNTILILFTAFIALLGFFGMIAEPLA. 4 AXPX repeats span residues 27–30, 31–34, 37–40, and 41–44; these read ADPL, ADPD, and ADPE. The propeptide occupies 28–45; that stretch reads DPLADPLPDADPDADPET.

The protein belongs to the MCD family. Mastoparan subfamily. Expressed by the venom gland.

It localises to the secreted. In terms of biological role, the synthetic peptide shows weak antimicrobial activities against a few Gram-positive bacteria (only 2 on the 11 strains tested) and the fungus C.albicans. Does not show activity against all the Gram-negative bacteria tested. Exhibits little hemolytic activity against washed human erythrocytes. This chain is Mastoparan-VT5, found in Vespa tropica (Greater banded hornet).